We begin with the raw amino-acid sequence, 202 residues long: Dephospho-CoA kinase (202 aa).

The DPCK domain maps to 3–202 (IFGLTGGIGS…ISHRSKYLSC (200 aa)). 11 to 16 (GSGKSL) provides a ligand contact to ATP.

Belongs to the CoaE family.

It localises to the cytoplasm. It carries out the reaction 3'-dephospho-CoA + ATP = ADP + CoA + H(+). It participates in cofactor biosynthesis; coenzyme A biosynthesis; CoA from (R)-pantothenate: step 5/5. Functionally, catalyzes the phosphorylation of the 3'-hydroxyl group of dephosphocoenzyme A to form coenzyme A. The protein is Dephospho-CoA kinase of Ehrlichia chaffeensis (strain ATCC CRL-10679 / Arkansas).